We begin with the raw amino-acid sequence, 1345 residues long: MENWQATEILPKIEAPLNIFNDIKTYTAEQLFDNLRIYFGDDPSRYNISFEALLGIYCNKIEWINFFTTPIAVAANVIRFNDVSRMTLGKVLFFIQLPRVATGNDVTASKETTIMVAKHSEKHPINISFDLSAACLEHLENTFKNTVIDQILNINALHTVLRSLKNSADSLERGLIHAFMQTLLRKSPPQFIVLTMNENKVHNKQALSRVQRSNMFQSLKNRLLTSLFFLNRNNNISYIYRILNDMMESVTESILNDTNNYTSKENVPLDGVLLGPIGSIQKLTSILSQYISTQVVSAPISYGHFIMGKENAVTAIAYRAIMADFTQFTVNAGTEQQDTNNKSEIFDKSRAYADLKLNTLKLGDKLVAFDHLHKVYKNTDVNDPLEQSLQLTFFFPLGIYIPSETGFSTMETRVKLNDTMENNLPTSVFFHNKDQVVQRIDFADILPSVCHPIVHDSTIVERLMKSEPLPTGHRFSQLCQLKITRENPARILQTLYNLYESRQEVPKNTNVLKNELNIEDFYKPDNPTLPTERHPFFDLTYIQKNRATEVLCTPRIMIGNIPLPLAPVSFHEARTNQILEHAKTNCQNYDFTLKIVTESLTSGSYPELAYVIETLVHGNKHAFMILKQVISQCISYWFNMKHILLFCNSFEMIMLISNHMGDELIPGAAFAHYRNLVSLIRLVKRTISISNLNEQLCGEPLVNFANALFDGRLFCPFVHTMPRNDTNAKITADDTPLTQNTVRVRNYEISDVQRMNLIDSSVVFTDNDRPSNETTILSKIFYFCVLPALSNNKACGAGVNVKELVLDLFYTEPFISPDDYFQENPITSDVLMSLIREGMGPGYTVANTSCIAKQLFKSLIYINENTKILEVEVSLDPAQRHGNSVHFQSLQHILYNGLCLISPITTLRRYYQPIPFHRFFSDPGICGTMNADIQVFLNTFPHCQRNDGGFPLPPPLALEFYNWQRTPFSVYSAFCPNSLLSIMTLAAMHSKLSPVAIAIQSKNKIHPGFAATLVRTDNFDVECLLYSSRAATSIILDDPTVTAEAKDIATTYNFTQHLSFVDMGLGFSSTTATANLKRIKSDMGSKIQNLFSAFPIHAFTNADINTWIRHHVGIEKPNPSESEALNIITFGGINKNPPSILLHGQQAICEVILTPVTTNINFFKSPHNPRGRESCMMGTDPHNEEAARKALYDHTQTDSDTFAATTNPWASLPGSLGDILYNTAHREQLCYNPKTYSPNAQFFTESDILKTNKMMYKVISEYCMKSNSCLNSDSEIQYSCSEGTDSFVSRPCQFLQNALPLHCSSNQALLESRSKTGNTQISETHYCNYAIGETIPFQLIIESSI.

Belongs to the herpesviridae major capsid protein family. Homomultimer. Makes the hexons and eleven out of twelve pentons. Interacts with triplex proteins 1/TRX1 and 2/TRX2; adjacent capsomers are linked together in groups of three by triplexes, heterotrimeric complexes composed of one molecule of TRX1 and two molecules of TRX2. Interacts with scaffold protein; this interaction allows efficient MCP transport to the host nucleus. Interacts with capsid vertex component 2/CVC2. Interacts with the small capsomere-interacting protein/SCP.

It is found in the virion. The protein resides in the host nucleus. Functionally, self-assembles to form an icosahedral capsid with a T=16 symmetry, about 200 nm in diameter, and consisting of 150 hexons and 12 pentons (total of 162 capsomers). Hexons form the edges and faces of the capsid and are each composed of six MCP molecules. In contrast, one penton is found at each of the 12 vertices. Eleven of the pentons are MCP pentamers, while the last vertex is occupied by the portal complex. The capsid is surrounded by a layer of proteinaceous material designated the tegument which, in turn, is enclosed in an envelope of host cell-derived lipids containing virus-encoded glycoproteins. The polypeptide is Major capsid protein (Human herpesvirus 6A (strain Uganda-1102) (HHV-6 variant A)).